Here is a 195-residue protein sequence, read N- to C-terminus: HTH-type transcriptional regulator BetI (195 aa).

An HTH tetR-type domain is found at 8–68; that stretch reads SIRRRQLIDA…ATMRDITSQL (61 aa). Residues 31–50 constitute a DNA-binding region (H-T-H motif); the sequence is TIAQIARRAGVSTGIISHYF.

It functions in the pathway amine and polyamine biosynthesis; betaine biosynthesis via choline pathway [regulation]. Its function is as follows. Repressor involved in the biosynthesis of the osmoprotectant glycine betaine. It represses transcription of the choline transporter BetT and the genes of BetAB involved in the synthesis of glycine betaine. In Shigella flexneri serotype 5b (strain 8401), this protein is HTH-type transcriptional regulator BetI.